The following is a 347-amino-acid chain: MSFKVYDPIAELIATQFPTSNPDLQIINNDVLVVSPHKITLPMGPQNAGDVTNKAYVDQAVMSAAVPVASSTTVGTIQMAGDLEGSSGTNPIIAANKITLNKLQKIGPKMVIGNPNSDWNNTQEIELDSSFRIVDNRLNAGIVPISSTDPNKSNTVIPAPQQNGLFYLDSSGRVWVWAEHYYKCITPSRYISKWMGVGDFQELTVGQSVMWDSGRPSIETVSTQGLEVEWISSTNFTLSSLYLIPIVVKVTICIPLLGQPDQMAKFVLYSVSSAQQPRTGIVLTTDSSRSSAPIVSEYITVNWFEPKSYSVQLKEVNSDSGTTVTICSDKWLANPFLDCWITIEEVG.

This is an uncharacterized protein from Invertebrate iridescent virus 3 (IIV-3).